The chain runs to 304 residues: Arginine-binding protein ArgT (304 aa).

An N-terminal signal peptide occupies residues 1 to 26 (MRFPKIPKRAVAATVGIVATSFTLAS). Cysteine 27 carries the N-palmitoyl cysteine lipid modification. Cysteine 27 is lipidated: S-diacylglycerol cysteine.

It belongs to the bacterial solute-binding protein 3 family. In terms of assembly, the complex is probably composed of two ATP-binding proteins (ArgV), two transmembrane proteins (ArgU) and a solute-binding protein (ArgT).

The protein resides in the cell membrane. Part of the ABC transporter complex ArgTUV involved in L-arginine import. May also transport L-citrulline. Binds L-arginine and its molecular precursor L-citrulline, but not L-histidine, L-glutamate, L-glutamine, L-lysine or L-cysteine. This is Arginine-binding protein ArgT from Corynebacterium glutamicum (strain ATCC 13032 / DSM 20300 / JCM 1318 / BCRC 11384 / CCUG 27702 / LMG 3730 / NBRC 12168 / NCIMB 10025 / NRRL B-2784 / 534).